The following is a 168-amino-acid chain: Bcl2-associated agonist of cell death (168 aa).

Methionine 1 bears the N-acetylmethionine mark. The interval 1–105 is disordered; that stretch reads MFQIPEFEPS…RSRSAPPNLW (105 aa). Serine 25 bears the Phosphoserine mark. Polar residues predominate over residues 49–60; it reads SHQQEQPTSSSH. Phosphoserine occurs at positions 75 and 91. Asymmetric dimethylarginine; by PRMT1 is present on residues arginine 94 and arginine 96. Serine 97 bears the Phosphoserine mark. Serine 99 is modified (phosphoserine; by PKA, PKB, PAK1, RPS6KA1, RPS6KB1 and PKC/PRKCQ). Serine 99 carries the phosphoserine; by PKB/AKT1 modification. Positions 110-124 match the BH3 motif; that stretch reads YGRELRRMSDEFVDS. Phosphoserine occurs at positions 118 and 134. The interval 125–145 is disordered; that stretch reads FKKGLPRPKSAGTATQMRQSS. Over residues 136-145 the composition is skewed to polar residues; it reads GTATQMRQSS. The residue at position 161 (arginine 161) is an Omega-N-methylarginine.

Belongs to the Bcl-2 family. As to quaternary structure, forms heterodimers with the anti-apoptotic proteins, Bcl-X(L), Bcl-2 and Bcl-W. Also binds protein S100A10. The Ser-75/Ser-99 phosphorylated form binds 14-3-3 proteins. Interacts with AKT1 and PIM3. Interacts (via BH3 domain) with NOL3 (via CARD domain); preventing the association of BAD with BCL2. Interacts with HIF3A (via C-terminus domain); the interaction reduces the binding between BAD and BAX. Interacts with GIMAP3/IAN4 and GIMAP5/IAN5. In terms of processing, phosphorylated on one or more of Ser-75, Ser-99, Ser-118 and Ser-134 in response to survival stimuli, which blocks its pro-apoptotic activity. Phosphorylation on Ser-99 or Ser-75 promotes heterodimerization with 14-3-3 proteins. This interaction then facilitates the phosphorylation at Ser-118, a site within the BH3 motif, leading to the release of Bcl-X(L) and the promotion of cell survival. Ser-99 is the major site of AKT/PKB phosphorylation, Ser-118 the major site of protein kinase A (CAPK) phosphorylation. Phosphorylation at Ser-99 by PKB/AKT1 is almost completely blocked by the apoptotic C-terminus cleavage product of PKN2 generated by caspases-3 activity during apoptosis. Post-translationally, methylation at Arg-94 and Arg-96 by PRMT1 inhibits Akt-mediated phosphorylation at Ser-99. As to expression, expressed in a wide variety of tissues.

The protein resides in the mitochondrion outer membrane. It is found in the cytoplasm. In terms of biological role, promotes cell death. Successfully competes for the binding to Bcl-X(L), Bcl-2 and Bcl-W, thereby affecting the level of heterodimerization of these proteins with BAX. Can reverse the death repressor activity of Bcl-X(L), but not that of Bcl-2. Appears to act as a link between growth factor receptor signaling and the apoptotic pathways. This Homo sapiens (Human) protein is Bcl2-associated agonist of cell death (BAD).